We begin with the raw amino-acid sequence, 186 residues long: Ribosome-recycling factor (186 aa).

The protein belongs to the RRF family.

Its subcellular location is the cytoplasm. Functionally, responsible for the release of ribosomes from messenger RNA at the termination of protein biosynthesis. May increase the efficiency of translation by recycling ribosomes from one round of translation to another. This Rickettsia prowazekii (strain Madrid E) protein is Ribosome-recycling factor.